The primary structure comprises 223 residues: Protein-lysine N-methyltransferase CG9154 (223 aa).

Belongs to the class I-like SAM-binding methyltransferase superfamily. EFM5 family.

It is found in the cytoplasm. Its function is as follows. S-adenosyl-L-methionine-dependent protein-lysine N-methyltransferase that methylates elongation factor 1-alpha. The polypeptide is Protein-lysine N-methyltransferase CG9154 (Drosophila melanogaster (Fruit fly)).